Reading from the N-terminus, the 142-residue chain is Large ribosomal subunit protein uL11 (142 aa).

The protein belongs to the universal ribosomal protein uL11 family. Part of the ribosomal stalk of the 50S ribosomal subunit. Interacts with L10 and the large rRNA to form the base of the stalk. L10 forms an elongated spine to which L12 dimers bind in a sequential fashion forming a multimeric L10(L12)X complex. In terms of processing, one or more lysine residues are methylated.

Its function is as follows. Forms part of the ribosomal stalk which helps the ribosome interact with GTP-bound translation factors. This Serratia proteamaculans (strain 568) protein is Large ribosomal subunit protein uL11.